The primary structure comprises 844 residues: Patched-related protein 9 (844 aa).

Residues 264-421 (LIPWMPWTSL…VTFFNAVMSL (158 aa)) enclose the SSD domain.

It belongs to the patched family.

This is Patched-related protein 9 (ptr-9) from Caenorhabditis elegans.